The following is a 346-amino-acid chain: Protein RecA (346 aa).

Residue 65 to 72 (GPESSGKT) coordinates ATP.

It belongs to the RecA family.

It localises to the cytoplasm. Functionally, can catalyze the hydrolysis of ATP in the presence of single-stranded DNA, the ATP-dependent uptake of single-stranded DNA by duplex DNA, and the ATP-dependent hybridization of homologous single-stranded DNAs. It interacts with LexA causing its activation and leading to its autocatalytic cleavage. In Enterococcus hirae (strain ATCC 9790 / DSM 20160 / JCM 8729 / LMG 6399 / NBRC 3181 / NCIMB 6459 / NCDO 1258 / NCTC 12367 / WDCM 00089 / R), this protein is Protein RecA.